A 1466-amino-acid chain; its full sequence is MARLAAALWSLCVTTVLVTSATQGLSRAGLPFGLMRRELACEGYPIELRCPGSDVIMVENANYGRTDDKICDADPFQMENVQCYLPDAFKIMSQRCNNRTQCVVVAGSDAFPDPCPGTYKYLEVQYDCVPYIFVCPGTLQKVLEPTSTHESEHQSGAWCKDPLQAGDRIYVMPWIPYRTDTLTEYASWEDYVAARHTTTYRLPNRVDGTGFVVYDGAVFYNKERTRNIVKYDLRTRIKSGETVINTANYHDTSPYRWGGKTDIDLAVDENGLWVIYATEGNNGRLVVSQLNPYTLRFEGTWETGYDKRSASNAFMVCGVLYVLRSVYVDDDSEAAGNRVDYAFNTNANREEPVSLAFPNPYQFVSSVDYNPRDNQLYVWNNYFVVRYSLEFGPPDPSAGPATSPPLSTTTTARPTPLTSTASPAATTPLRRAPLTTHPVGAINQLGPDLPPATAPAPSTRRPPAPNLHVSPELFCEPREVRRVQWPATQQGMLVERPCPKGTRGIASFQCLPALGLWNPRGPDLSNCTSPWVNQVAQKIKSGENAANIASELARHTRGSIYAGDVSSSVKLMEQLLDILDAQLQALRPIERESAGKNYNKMHKRERTCKDYIKAVVETVDNLLRPEALESWKDMNATEQVHTATMLLDVLEEGAFLLADNVREPARFLAAKQNVVLEVTVLNTEGQVQELVFPQEYPSENSIQLSANTIKQNSRNGVVKVVFILYNNLGLFLSTENATVKLAGEAGTGGPGGASLVVNSQVIAASINKESSRVFLMDPVIFTVAHLEAKNHFNANCSFWNYSERSMLGYWSTQGCRLVESNKTHTTCACSHLTNFAVLMAHREIYQGRINELLLSVITWVGIVISLVCLAICISTFCFLRGLQTDRNTIHKNLCINLFLAELLFLVGIDKTQYEVACPIFAGLLHYFFLAAFSWLCLEGVHLYLLLVEVFESEYSRTKYYYLGGYCFPALVVGIAAAIDYRSYGTEKACWLRVDNYFIWSFIGPVSFVIVVNLVFLMVTLHKMIRSSSVLKPDSSRLDNIKSWALGAIALLFLLGLTWAFGLLFINKESVVMAYLFTTFNAFQGVFIFVFHCALQKKVHKEYSKCLRHSYCCIRSPPGGTHGSLKTSAMRSNTRYYTGTQSRIRRMWNDTVRKQTESSFMAGDINSTPTLNRGTMGNHLLTNPVLQPRGGTSPYNTLIAESVGFNPSSPPVFNSPGSYREPKHPLGGREACGMDTLPLNGNFNNSYSLRSGDFPPGDGGPEPPRGRNLADAAAFEKMIISELVHNNLRGASGGAKGPPPEPPVPPVPGVSEDEAGGPGSADRAEIELLYKALEEPLLLPRAQSVLYQSDLDESESCTAEDGATSRPLSSPPGRDSLYASGANLRDSPSYPDSSPEGPNEALPPPPPAPPGPPEIYYTSRPPALVARNPLQGYYQVRRPSHEGYLAAPSLEGPGPDGDGQMQLVTSL.

A signal peptide spans 1 to 28 (MARLAAALWSLCVTTVLVTSATQGLSRA). At 29-852 (GLPFGLMRRE…EIYQGRINEL (824 aa)) the chain is on the extracellular side. Residues 40 to 129 (ACEGYPIELR…KYLEVQYDCV (90 aa)) enclose the SUEL-type lectin domain. Disulfide bonds link cysteine 41–cysteine 71, cysteine 50–cysteine 128, cysteine 83–cysteine 115, cysteine 96–cysteine 102, and cysteine 135–cysteine 317. Position 42 (glutamate 42) interacts with alpha-L-rhamnose. Asparagine 98 carries an N-linked (GlcNAc...) asparagine glycan. 117-120 (GTYK) is an alpha-L-rhamnose binding site. In terms of domain architecture, Olfactomedin-like spans 134–393 (VCPGTLQKVL…VVRYSLEFGP (260 aa)). Positions 395–463 (DPSAGPATSP…APAPSTRRPP (69 aa)) are disordered. The span at 400–436 (PATSPPLSTTTTARPTPLTSTASPAATTPLRRAPLTT) shows a compositional bias: low complexity. Pro residues predominate over residues 448-463 (DLPPATAPAPSTRRPP). Cystine bridges form between cysteine 475–cysteine 510 and cysteine 498–cysteine 527. N-linked (GlcNAc...) asparagine glycans are attached at residues asparagine 526, asparagine 635, asparagine 736, asparagine 795, asparagine 800, and asparagine 821. The region spanning 664–845 (PARFLAAKQN…AVLMAHREIY (182 aa)) is the GAIN-B domain. 2 disulfide bridges follow: cysteine 796/cysteine 827 and cysteine 815/cysteine 829. The tract at residues 796-845 (CSFWNYSERSMLGYWSTQGCRLVESNKTHTTCACSHLTNFAVLMAHREIY) is GPS. A helical membrane pass occupies residues 853–873 (LLSVITWVGIVISLVCLAICI). At 874-887 (STFCFLRGLQTDRN) the chain is on the cytoplasmic side. Residues 888-908 (TIHKNLCINLFLAELLFLVGI) traverse the membrane as a helical segment. The Extracellular portion of the chain corresponds to 909 to 914 (DKTQYE). A helical transmembrane segment spans residues 915–935 (VACPIFAGLLHYFFLAAFSWL). At 936-958 (CLEGVHLYLLLVEVFESEYSRTK) the chain is on the cytoplasmic side. Residues 959–979 (YYYLGGYCFPALVVGIAAAID) form a helical membrane-spanning segment. The Extracellular portion of the chain corresponds to 980 to 996 (YRSYGTEKACWLRVDNY). The helical transmembrane segment at 997-1017 (FIWSFIGPVSFVIVVNLVFLM) threads the bilayer. At 1018-1044 (VTLHKMIRSSSVLKPDSSRLDNIKSWA) the chain is on the cytoplasmic side. A helical membrane pass occupies residues 1045-1065 (LGAIALLFLLGLTWAFGLLFI). The Extracellular segment spans residues 1066–1069 (NKES). The helical transmembrane segment at 1070 to 1090 (VVMAYLFTTFNAFQGVFIFVF) threads the bilayer. Residues 1091-1466 (HCALQKKVHK…DGQMQLVTSL (376 aa)) are Cytoplasmic-facing. Position 1188 is an omega-N-methylarginine (arginine 1188). Serine 1214 is modified (phosphoserine). Disordered regions lie at residues 1242–1267 (FNNS…RGRN), 1288–1319 (RGAS…GPGS), 1352–1421 (ESES…SRPP), and 1443–1466 (YLAA…VTSL). The segment covering 1296–1307 (GPPPEPPVPPVP) has biased composition (pro residues). Serine 1319 is modified (phosphoserine). The span at 1400 to 1412 (ALPPPPPAPPGPP) shows a compositional bias: pro residues. A phosphoserine mark is found at serine 1448 and serine 1465.

The protein belongs to the G-protein coupled receptor 2 family. Adhesion G-protein coupled receptor (ADGR) subfamily. In terms of assembly, forms a heterodimer, consisting of a large extracellular region (p120) non-covalently linked to a seven-transmembrane moiety (p85). Interacts with syntaxin and with proteins of the SHANK family via the PDZ domain. Interacts (via extracellular domain) with FLRT1, FLRT2 and FLRT3 (via extracellular domain). In terms of processing, autoproteolytically cleaved into 2 subunits, an extracellular subunit and a seven-transmembrane subunit. This proteolytic processing takes place early in the biosynthetic pathway, either in the endoplasmic reticulum or in the early compartment of the Golgi apparatus.

The protein localises to the cell membrane. Its subcellular location is the cell projection. It localises to the axon. The protein resides in the growth cone. It is found in the synapse. The protein localises to the presynaptic cell membrane. Its subcellular location is the synaptosome. In terms of biological role, calcium-independent receptor of high affinity for alpha-latrotoxin, an excitatory neurotoxin present in black widow spider venom which triggers massive exocytosis from neurons and neuroendocrine cells. Receptor for TENM2 that mediates heterophilic synaptic cell-cell contact and postsynaptic specialization. Receptor probably implicated in the regulation of exocytosis. In Mus musculus (Mouse), this protein is Adhesion G protein-coupled receptor L1.